The sequence spans 556 residues: MSVSAFNRRWAAVILEALTRHGVRHICIAPGSRSTPLTLAAAENSAFIHHTHFDERGLGHLALGLAKVSKQPVAVIVTSGTAVANLYPALIEAGLTGEKLILLTADRPPELIDCGANQAIRQPGMFASHPTHSISLPRPTQDIPARWLVSTIDHALGTLHAGGVHINCPFAEPLYGEMDDTGLSWQQRLGDWWQDDKPWLREAPRLESEKQRDWFFWRQKRGVVVAGRMSAEEGKKVALWAQTLGWPLIGDVLSQTGQPLPCADLWLGNAKATSELQQAQIVVQLGSSLTGKRLLQWQASCEPEEYWIVDDIEGRLDPAHHRGRRLIANIADWLELHPAEKRQPWCVEIPRLAEQAMQAVIACRDAFGEAQLAHRISDYLPEQGQLFVGNSLVVRLIDALSQLPAGYPVYSNRGASGIDGLLSTAAGVQRASGKPTLAIVGDLSALYDLNALALLRQVSAPLVLIVVNNNGGQIFSLLPTPKSERERFYLMPQNVHFEHAAAMFELKYHRPQNWQELETVLADAWRTPTTTVIEMVVNDTDGAQTLQQLLAQVSHL.

Belongs to the TPP enzyme family. MenD subfamily. As to quaternary structure, homodimer. Requires Mg(2+) as cofactor. The cofactor is Mn(2+). Thiamine diphosphate serves as cofactor.

The catalysed reaction is isochorismate + 2-oxoglutarate + H(+) = 5-enolpyruvoyl-6-hydroxy-2-succinyl-cyclohex-3-ene-1-carboxylate + CO2. Its pathway is quinol/quinone metabolism; 1,4-dihydroxy-2-naphthoate biosynthesis; 1,4-dihydroxy-2-naphthoate from chorismate: step 2/7. It functions in the pathway quinol/quinone metabolism; menaquinone biosynthesis. In terms of biological role, catalyzes the thiamine diphosphate-dependent decarboxylation of 2-oxoglutarate and the subsequent addition of the resulting succinic semialdehyde-thiamine pyrophosphate anion to isochorismate to yield 2-succinyl-5-enolpyruvyl-6-hydroxy-3-cyclohexene-1-carboxylate (SEPHCHC). This chain is 2-succinyl-5-enolpyruvyl-6-hydroxy-3-cyclohexene-1-carboxylate synthase, found in Escherichia coli O157:H7.